The following is a 225-amino-acid chain: MTQQTTPDDLSQSFIRFALDAGVLSFGEFVTKAGRKSPYFFNAGLFNQGAMLGQVAQFYAKTLLESGVQFDVLFGPAYKGITLASATAVALAGMGRDVGFSYNRKEAKDHGEGGTLVGAKLQGKVVIIDDVISAGTSVRESMQLIRAAGAEPAAVLIALDRMEKSGTADNIGTHSAVQDVQREYGIPVIAIATLKDLLAYLDASKDPSLGNSREAVAAYRQKYGV.

A 5-phospho-alpha-D-ribose 1-diphosphate-binding site is contributed by K32. 40-41 (FF) serves as a coordination point for orotate. 5-phospho-alpha-D-ribose 1-diphosphate is bound by residues 78–79 (YK), R104, K105, K108, H110, and 129–137 (DDVISAGTS). Residues S133 and R161 each coordinate orotate.

The protein belongs to the purine/pyrimidine phosphoribosyltransferase family. PyrE subfamily. Homodimer. Mg(2+) is required as a cofactor.

It catalyses the reaction orotidine 5'-phosphate + diphosphate = orotate + 5-phospho-alpha-D-ribose 1-diphosphate. Its pathway is pyrimidine metabolism; UMP biosynthesis via de novo pathway; UMP from orotate: step 1/2. In terms of biological role, catalyzes the transfer of a ribosyl phosphate group from 5-phosphoribose 1-diphosphate to orotate, leading to the formation of orotidine monophosphate (OMP). This chain is Orotate phosphoribosyltransferase, found in Cupriavidus metallidurans (strain ATCC 43123 / DSM 2839 / NBRC 102507 / CH34) (Ralstonia metallidurans).